The chain runs to 457 residues: UDP-N-acetylmuramoylalanine--D-glutamate ligase (457 aa).

116-122 (GTNGKTT) contributes to the ATP binding site.

Belongs to the MurCDEF family.

Its subcellular location is the cytoplasm. It carries out the reaction UDP-N-acetyl-alpha-D-muramoyl-L-alanine + D-glutamate + ATP = UDP-N-acetyl-alpha-D-muramoyl-L-alanyl-D-glutamate + ADP + phosphate + H(+). It functions in the pathway cell wall biogenesis; peptidoglycan biosynthesis. Cell wall formation. Catalyzes the addition of glutamate to the nucleotide precursor UDP-N-acetylmuramoyl-L-alanine (UMA). This chain is UDP-N-acetylmuramoylalanine--D-glutamate ligase, found in Caldicellulosiruptor bescii (strain ATCC BAA-1888 / DSM 6725 / KCTC 15123 / Z-1320) (Anaerocellum thermophilum).